A 434-amino-acid chain; its full sequence is MEEINKYIQNSSETGGEIYNLIEELFPICRSITGNGVRKTMDIIRKHIPLEIHEVKSGTKVFDWTVPKEWNIKDAYVRNSKGEKVIDFKENNLHVMSYSVPVHKTMTLDELKPYLHTIPGNKDRIPYLTSYYKENWGFSLTQNKFDELCDDDYEVVIDSSLEDGSLTYGEYYIRGELEEEILLTTYTCHPSMCNDNLSGVALITFIAKALSKLKTKYSYRFLFAPETIGSITWLSRNEDKLKNIKMGLVATCVGDAGIKNYKRTKFGDAEIDKIVEKVLMHCGSEYYVADFFPWGSDERQFSSPGINLPVGSLMRSCYGFDGYHTSADNLCYMNKDGLADSYKTYLEVIYTIENNRTYLNLNPKCEPQLGKRGIYRMIGGGSDYPFDEFAMFWVLNMSDGKNSLLDIAYKSGMEFRRIKYAADALYRVELLKLV.

2 aminopeptidase-like regions span residues 1 to 55 and 57 to 355; these read MEEI…IHEV and SGTK…IENN. Positions 56 to 164 are insert; that stretch reads KSGTKVFDWT…VVIDSSLEDG (109 aa). Residues H189, D195, and H324 each contribute to the Zn(2+) site. Residues 356 to 434 form a permutated winged helix-turn-helix region; it reads RTYLNLNPKC…LYRVELLKLV (79 aa).

This sequence belongs to the UPF0770 family. Homotrimer. Zn(2+) serves as cofactor.

In terms of biological role, the genomic context suggests a role in the biosynthesis of modified polysaccharides; this association with genes involved in carbohydrate metabolism is observed in several phylogenetically distinct taxa. Is not expected to have peptidase activity despite low similarity to aminopeptidases. This is Putative polysaccharide biosynthesis protein with aminopeptidase-like domain from Clostridium acetobutylicum (strain ATCC 824 / DSM 792 / JCM 1419 / IAM 19013 / LMG 5710 / NBRC 13948 / NRRL B-527 / VKM B-1787 / 2291 / W).